We begin with the raw amino-acid sequence, 523 residues long: 2-isopropylmalate synthase (523 aa).

One can recognise a Pyruvate carboxyltransferase domain in the interval Val-5–Trp-267. Asp-14, His-202, His-204, and Asn-238 together coordinate Mn(2+). The segment at Arg-392 to Val-523 is regulatory domain.

Belongs to the alpha-IPM synthase/homocitrate synthase family. LeuA type 1 subfamily. In terms of assembly, homodimer. Mn(2+) serves as cofactor.

It is found in the cytoplasm. It carries out the reaction 3-methyl-2-oxobutanoate + acetyl-CoA + H2O = (2S)-2-isopropylmalate + CoA + H(+). The protein operates within amino-acid biosynthesis; L-leucine biosynthesis; L-leucine from 3-methyl-2-oxobutanoate: step 1/4. In terms of biological role, catalyzes the condensation of the acetyl group of acetyl-CoA with 3-methyl-2-oxobutanoate (2-ketoisovalerate) to form 3-carboxy-3-hydroxy-4-methylpentanoate (2-isopropylmalate). The chain is 2-isopropylmalate synthase from Cronobacter sakazakii (strain ATCC BAA-894) (Enterobacter sakazakii).